The primary structure comprises 102 residues: uncharacterized protein (102 aa).

This is an uncharacterized protein from Schizosaccharomyces pombe (strain 972 / ATCC 24843) (Fission yeast).